A 284-amino-acid polypeptide reads, in one-letter code: tRNA pseudouridine synthase A (284 aa).

Asp-62 functions as the Nucleophile in the catalytic mechanism. A substrate-binding site is contributed by Tyr-123.

The protein belongs to the tRNA pseudouridine synthase TruA family. Homodimer.

The enzyme catalyses uridine(38/39/40) in tRNA = pseudouridine(38/39/40) in tRNA. Its function is as follows. Formation of pseudouridine at positions 38, 39 and 40 in the anticodon stem and loop of transfer RNAs. This chain is tRNA pseudouridine synthase A, found in Streptomyces griseus subsp. griseus (strain JCM 4626 / CBS 651.72 / NBRC 13350 / KCC S-0626 / ISP 5235).